The primary structure comprises 352 residues: UDP-N-acetylglucosamine--N-acetylmuramyl-(pentapeptide) pyrophosphoryl-undecaprenol N-acetylglucosamine transferase (352 aa).

Residues Ser-195 and Gln-287 each coordinate UDP-N-acetyl-alpha-D-glucosamine.

Belongs to the glycosyltransferase 28 family. MurG subfamily.

It is found in the cell membrane. The enzyme catalyses Mur2Ac(oyl-L-Ala-gamma-D-Glu-L-Lys-D-Ala-D-Ala)-di-trans,octa-cis-undecaprenyl diphosphate + UDP-N-acetyl-alpha-D-glucosamine = beta-D-GlcNAc-(1-&gt;4)-Mur2Ac(oyl-L-Ala-gamma-D-Glu-L-Lys-D-Ala-D-Ala)-di-trans,octa-cis-undecaprenyl diphosphate + UDP + H(+). Its pathway is cell wall biogenesis; peptidoglycan biosynthesis. Its function is as follows. Cell wall formation. Catalyzes the transfer of a GlcNAc subunit on undecaprenyl-pyrophosphoryl-MurNAc-pentapeptide (lipid intermediate I) to form undecaprenyl-pyrophosphoryl-MurNAc-(pentapeptide)GlcNAc (lipid intermediate II). This is UDP-N-acetylglucosamine--N-acetylmuramyl-(pentapeptide) pyrophosphoryl-undecaprenol N-acetylglucosamine transferase from Streptococcus pneumoniae (strain JJA).